The following is a 287-amino-acid chain: tRNA selenocysteine 1-associated protein 1 (287 aa).

RRM domains are found at residues 3-86 and 96-175; these read ASLW…YATY and YSLF…VAIP.

The protein belongs to the RRM TRSPAP family. In terms of assembly, component of the tRNA(Sec) complex composed at least of EEFSEC, SECISBP2, SEPHS1, SEPSECS, TRNAU1AP and tRNA(Sec). Found in a complex with tRNA(Sec). Interacts with SEPSECS. Associates with mRNP and/or polysomes. Found in a complex with EEFSEC, SECISBP2, TRNAU1AP and tRNA(Sec).

The protein localises to the nucleus. It localises to the cytoplasm. In terms of biological role, involved in the early steps of selenocysteine biosynthesis and tRNA(Sec) charging to the later steps resulting in the cotranslational incorporation of selenocysteine into selenoproteins. Stabilizes the SECISBP2, EEFSEC and tRNA(Sec) complex. May be involved in the methylation of tRNA(Sec). Enhances efficiency of selenoproteins synthesis. This chain is tRNA selenocysteine 1-associated protein 1 (TRNAU1AP), found in Bos taurus (Bovine).